A 337-amino-acid chain; its full sequence is MEGKRPQFGNRHLDDPSRVFQHNAWDNVQWSEEQESAAHKKVQENSVQPLPLEKQEEYENKASNFWDDFYTIHENRFFKDRHWLFTEFPELSSRSSTQTGTESQEGQVMQLNGCQEETERADVENPFPGASATYRIMEVGCGVGNTVFPILQNNTDPGLFVYCCDFSSTAVELVKSNELYSPSRCFAFVHDVSDEQSSFPMPEHSLDVIVLIFVLSAINPAKMQNVISRLSSLLKPGGCILLRDYGRYDMAQLRFKKGRCLAENFYVRGDGTRVYFFTQDDLDTLFISAGLQKVQNTVDRRLQVNRGKQLTMYRVWIQCKYVKPQETELQNGGCSSE.

The S-adenosyl-L-methionine site is built by Trp66, Tyr70, Gly140, Asp165, Asp191, and Ile212.

It belongs to the methyltransferase superfamily. METL family. As to quaternary structure, monomer.

The protein resides in the cytoplasm. The catalysed reaction is cytidine(32) in tRNA(Thr) + S-adenosyl-L-methionine = N(3)-methylcytidine(32) in tRNA(Thr) + S-adenosyl-L-homocysteine + H(+). It catalyses the reaction cytidine(32) in tRNA(Arg)(CCU) + S-adenosyl-L-methionine = N(3)-methylcytidine(32) in tRNA(Arg)(CCU) + S-adenosyl-L-homocysteine + H(+). In terms of biological role, S-adenosyl-L-methionine-dependent methyltransferase that mediates N(3)-methylcytidine modification of residue 32 of the tRNA anticodon loop of tRNA(Thr)(UGU) and tRNA(Arg)(CCU). N(3)-methylcytidine methylation by mettl2 requires the N6-threonylcarbamoylation of tRNA (t6A37) by the EKC/KEOPS complex as prerequisite. The polypeptide is tRNA N(3)-cytidine methyltransferase METTL2 (mettl2) (Xenopus tropicalis (Western clawed frog)).